The following is a 469-amino-acid chain: Argininosuccinate lyase (469 aa).

Belongs to the lyase 1 family. Argininosuccinate lyase subfamily.

The protein localises to the cytoplasm. The enzyme catalyses 2-(N(omega)-L-arginino)succinate = fumarate + L-arginine. Its pathway is amino-acid biosynthesis; L-arginine biosynthesis; L-arginine from L-ornithine and carbamoyl phosphate: step 3/3. The sequence is that of Argininosuccinate lyase from Burkholderia vietnamiensis (strain G4 / LMG 22486) (Burkholderia cepacia (strain R1808)).